Here is a 422-residue protein sequence, read N- to C-terminus: Phytoene synthase, chloroplastic (422 aa).

Residues M1–A83 constitute a chloroplast transit peptide.

The protein belongs to the phytoene/squalene synthase family. As to quaternary structure, monomer.

The protein resides in the plastid. Its subcellular location is the chloroplast. The enzyme catalyses 2 (2E,6E,10E)-geranylgeranyl diphosphate = 15-cis-phytoene + 2 diphosphate. Its pathway is carotenoid biosynthesis; phytoene biosynthesis; all-trans-phytoene from geranylgeranyl diphosphate: step 1/1. Functionally, catalyzes the reaction from prephytoene diphosphate to phytoene. This Cucumis melo (Muskmelon) protein is Phytoene synthase, chloroplastic (PSY).